Reading from the N-terminus, the 534-residue chain is uncharacterized protein (534 aa).

Residues 1 to 22 (MGLRLLFSLICVFCISNIFTQA) form the signal peptide. An N-linked (GlcNAc...) asparagine glycan is attached at asparagine 31. Disordered regions lie at residues 70–145 (PTYY…SSVS) and 176–418 (SSLS…SSAP). N-linked (GlcNAc...) asparagine glycosylation occurs at asparagine 426.

The protein resides in the endoplasmic reticulum. The protein localises to the cell membrane. This is an uncharacterized protein from Schizosaccharomyces pombe (strain 972 / ATCC 24843) (Fission yeast).